Reading from the N-terminus, the 95-residue chain is Protein TusB (95 aa).

It belongs to the DsrH/TusB family. Heterohexamer, formed by a dimer of trimers. The hexameric TusBCD complex contains 2 copies each of TusB, TusC and TusD. The TusBCD complex interacts with TusE.

The protein resides in the cytoplasm. In terms of biological role, part of a sulfur-relay system required for 2-thiolation of 5-methylaminomethyl-2-thiouridine (mnm(5)s(2)U) at tRNA wobble positions. The polypeptide is Protein TusB (Shigella sonnei (strain Ss046)).